A 223-amino-acid chain; its full sequence is Histone H1.5 (223 aa).

A compositionally biased stretch (low complexity) spans 1-14; it reads MSETAPAETAAPAP. The interval 1–56 is disordered; it reads MSETAPAETAAPAPVEKSPAKKKTTKKAGAAKRKATGPPVSELITKAVSASKERGG. Position 2 is an N-acetylserine (S2). S2 is subject to Phosphoserine. K17 is modified (N6-acetyllysine). S18 is modified (phosphoserine). Basic residues predominate over residues 20 to 35; that stretch reads AKKKTTKKAGAAKRKA. K27 carries the N6-methyllysine modification. K34 carries the post-translational modification N6-(beta-hydroxybutyryl)lysine; alternate. Residue K34 is modified to N6-succinyllysine; alternate. T36 is subject to Phosphothreonine. Positions 36–109 constitute an H15 domain; the sequence is TGPPVSELIT…GASGSFKLNK (74 aa). At K46 the chain carries N6-acetyllysine. The residue at position 52 (K52) is an N6-(beta-hydroxybutyryl)lysine. R54 carries the citrulline modification. Residue K64 is modified to N6-(beta-hydroxybutyryl)lysine. K75 carries the post-translational modification N6-acetyllysine. 3 positions are modified to N6-(beta-hydroxybutyryl)lysine: K85, K90, and K106. The interval 91-223 is disordered; the sequence is GTLVQTKGTG…KAKKAVSKKK (133 aa). Positions 119–130 are enriched in basic residues; sequence KAKKTGAAKAKK. T135 and T152 each carry phosphothreonine. Residues 137-158 show a composition bias toward basic residues; that stretch reads KKPKKTAGAKKTVKKTPKKAKK. K165 is subject to N6-acetyllysine. Basic residues predominate over residues 166–184; it reads KVAKSPKKAKAAAKPKKAA. Phosphoserine is present on residues S170 and S186. The segment covering 191 to 223 has biased composition (basic residues); sequence KAVKSKASKPKVTKPKTAKPKAAKAKKAVSKKK.

Belongs to the histone H1/H5 family. Interacts with MSX1. Post-translationally, H1 histones are progressively phosphorylated during the cell cycle, becoming maximally phosphorylated during late G2 phase and M phase, and being dephosphorylated sharply thereafter. Citrullination at Arg-54 (H1R54ci) by PADI4 takes place within the DNA-binding site of H1 and results in its displacement from chromatin and global chromatin decondensation, thereby promoting pluripotency and stem cell maintenance. In terms of processing, hydroxybutyrylation of histones is induced by starvation.

It localises to the nucleus. Its subcellular location is the chromosome. Histone H1 protein binds to linker DNA between nucleosomes forming the macromolecular structure known as the chromatin fiber. Histones H1 are necessary for the condensation of nucleosome chains into higher-order structured fibers. Also acts as a regulator of individual gene transcription through chromatin remodeling, nucleosome spacing and DNA methylation. The chain is Histone H1.5 (H1-5) from Mus musculus (Mouse).